Reading from the N-terminus, the 235-residue chain is Fibrillarin-like rRNA/tRNA 2'-O-methyltransferase (235 aa).

S-adenosyl-L-methionine is bound by residues 91 to 92 (TT), 110 to 111 (EF), 137 to 138 (DA), and 157 to 160 (DVAQ).

It belongs to the methyltransferase superfamily. Fibrillarin family. As to quaternary structure, interacts with nop5. Component of box C/D small ribonucleoprotein (sRNP) particles that contain rpl7ae, FlpA and nop5, plus a guide RNA.

In terms of biological role, involved in pre-rRNA and tRNA processing. Utilizes the methyl donor S-adenosyl-L-methionine to catalyze the site-specific 2'-hydroxyl methylation of ribose moieties in rRNA and tRNA. Site specificity is provided by a guide RNA that base pairs with the substrate. Methylation occurs at a characteristic distance from the sequence involved in base pairing with the guide RNA. The chain is Fibrillarin-like rRNA/tRNA 2'-O-methyltransferase from Pyrobaculum aerophilum (strain ATCC 51768 / DSM 7523 / JCM 9630 / CIP 104966 / NBRC 100827 / IM2).